Reading from the N-terminus, the 550-residue chain is Luciferin 4-monooxygenase (550 aa).

Residues S548–L550 carry the Microbody targeting signal motif.

It belongs to the ATP-dependent AMP-binding enzyme family. Mg(2+) is required as a cofactor.

The protein resides in the peroxisome. It catalyses the reaction firefly D-luciferin + ATP + O2 = firefly oxyluciferin + hnu + AMP + CO2 + diphosphate. Functionally, produces green light with a wavelength of 562 nm. The polypeptide is Luciferin 4-monooxygenase (Photinus pyralis (Common eastern firefly)).